The primary structure comprises 510 residues: 2,3-bisphosphoglycerate-independent phosphoglycerate mutase (510 aa).

Residues D12 and S62 each contribute to the Mn(2+) site. S62 (phosphoserine intermediate) is an active-site residue. Substrate contacts are provided by residues H123, 153 to 154, R185, R191, 261 to 264, and K336; these read RD and RPDR. Mn(2+)-binding residues include D403, H407, D444, H445, and H462.

This sequence belongs to the BPG-independent phosphoglycerate mutase family. In terms of assembly, monomer. Mn(2+) serves as cofactor.

It carries out the reaction (2R)-2-phosphoglycerate = (2R)-3-phosphoglycerate. The protein operates within carbohydrate degradation; glycolysis; pyruvate from D-glyceraldehyde 3-phosphate: step 3/5. In terms of biological role, essential for rapid growth and for sporulation. Catalyzes the interconversion of 2-phosphoglycerate and 3-phosphoglycerate. This Priestia megaterium (strain ATCC 12872 / QMB1551) (Bacillus megaterium) protein is 2,3-bisphosphoglycerate-independent phosphoglycerate mutase.